Consider the following 170-residue polypeptide: Cathelicidin antimicrobial peptide (170 aa).

A signal peptide spans 1 to 30; the sequence is MKTQRDGHSLGRWSLVLLLLGLVMPLAIIA. A propeptide spans 31 to 131 (cathelin-like domain (CLD)); that stretch reads QVLSYKEAVL…DISCDKDNKR (101 aa). Intrachain disulfides connect Cys86–Cys97 and Cys108–Cys125. The segment at 150–162 is active core; that stretch reads FKRIVQRIKDFLR.

The protein belongs to the cathelicidin family. In terms of assembly, monomer, homodimer or homotrimer (in vitro). Oligomerizes as tetra- or hexamer in solution (in vitro). The N-terminus is blocked. In terms of processing, proteolytically cleaved by proteinase PRTN3 into antibacterial peptide LL-37. Proteolytically cleaved by cathepsin CTSG and neutrophil elastase ELANE. Post-translationally, resistant to proteolytic degradation in solution, and when bound to both zwitterionic (mimicking mammalian membranes) and negatively charged membranes (mimicking bacterial membranes). After secretion onto the skin surface, the CAMP gene product is processed by a serine protease-dependent mechanism into multiple novel antimicrobial peptides distinct from and shorter than cathelicidin LL-37, such as peptides KR-20 (residues 151-170), LL-23 (residues 134-156), LL-29 (residues 134-162), KS-30 (residues 141-170), RK-31 (residues 140-170) and FF-33 (residues 138-170). The peptides act synergistically, killing bacteria at lower concentrations when present together, and maintain activity at increased salt condition. As to expression, expressed in neutrophilic granulocytes (at protein level). Expressed in bone marrow. In terms of tissue distribution, expressed in granulocytes (at protein level). Expressed by the eccrine apparatus and secreted into sweat on skin (at protein level). Expressed in bone marrow and testis.

It localises to the secreted. Its subcellular location is the vesicle. Antimicrobial protein that is an integral component of the innate immune system. Binds to bacterial lipopolysaccharides (LPS). Acts via neutrophil N-formyl peptide receptors to enhance the release of CXCL2. Postsecretory processing generates multiple cathelicidin antimicrobial peptides with various lengths which act as a topical antimicrobial defense in sweat on skin. The unprocessed precursor form, cathelicidin antimicrobial peptide, inhibits the growth of Gram-negative E.coli and E.aerogenes with efficiencies comparable to that of the mature peptide LL-37 (in vitro). In terms of biological role, antimicrobial peptide that is an integral component of the innate immune system. Binds to bacterial lipopolysaccharides (LPS). Causes membrane permeabilization by forming transmembrane pores (in vitro). Causes lysis of E.coli. Exhibits antimicrobial activity against Gram-negative bacteria such as P.aeruginosa, S.typhimurium, E.aerogenes, E.coli and P.syringae, Gram-positive bacteria such as L.monocytogenes, S.epidermidis, S.pyogenes and S.aureus, as well as vancomycin-resistant enterococci (in vitro). Exhibits antimicrobial activity against methicillin-resistant S.aureus, P.mirabilis, and C.albicans in low-salt media, but not in media containing 100 mM NaCl (in vitro). Forms chiral supramolecular assemblies with quinolone signal (PQS) molecules of P.aeruginosa, which may lead to interference of bacterial quorum signaling and perturbance of bacterial biofilm formation. May form supramolecular fiber-like assemblies on bacterial membranes. Induces cytokine and chemokine production as well as TNF/TNFA and CSF2/GMCSF production in normal human keratinocytes. Exhibits hemolytic activity against red blood cells. Functionally, exhibits antimicrobial activity against E.coli and B.megaterium (in vitro). Its function is as follows. Acts synergistically with peptides KS-30 and KR-31, killing bacteria such as S.aureus, E.coli and C.albicans at lower concentrations when present together, and maintains activity at increased salt condition. Does not have the ability to stimulate CXCL8/IL8 release from keratinocytes. Poorly active (MIC &gt; 150 uM) against E.coli strain K12. Is able to induce the pro-inflammatory cytokine TNF/TNFA or the chemokine CCL2/MCP1. In terms of biological role, moderately antibacterial. Functionally, moderately antibacterial. Acts synergistically with peptides KR-20 and KR-31, killing bacteria such as S.aureus, E.coli and C.albicans at lower concentrations when present together, and maintain activity at increased salt condition. Does not have the ability to stimulate CXCL8/IL8 release from keratinocytes. Its function is as follows. Acts synergistically with peptides KS-30 and KR-31, killing bacteria such as S.aureus, E.coli and C.albicans at lower concentrations when present together, and maintain activity at increased salt condition. Does not have the ability to stimulate CXCL8/IL8 release from keratinocytes. Inhibits the growth of E.coli and B.megaterium and exhibits hemolytic activity against human red blood cells. This is Cathelicidin antimicrobial peptide from Homo sapiens (Human).